The primary structure comprises 215 residues: WAT1-related protein At3g28060 (215 aa).

Transmembrane regions (helical) follow at residues 48 to 68, 82 to 102, 117 to 137, 146 to 166, and 176 to 196; these read IIIG…AVAY, FALA…VSLF, IMLI…VVES, VFLA…GAIF, and VIGG…FHIA. Residues 65–186 enclose the EamA domain; the sequence is AVAYIVQTHI…IGGTLISIGF (122 aa).

This sequence belongs to the drug/metabolite transporter (DMT) superfamily. Plant drug/metabolite exporter (P-DME) (TC 2.A.7.4) family.

Its subcellular location is the membrane. This is WAT1-related protein At3g28060 from Arabidopsis thaliana (Mouse-ear cress).